The chain runs to 247 residues: Caffeoyl-CoA O-methyltransferase (247 aa).

A substrate-binding site is contributed by K21. S-adenosyl-L-methionine is bound by residues T63, E85, 87–88 (GV), S93, D111, and A140. D163 lines the substrate pocket. D163 contacts a divalent metal cation. D165 contacts S-adenosyl-L-methionine. A divalent metal cation is bound by residues D189 and N190. N194 provides a ligand contact to substrate.

Belongs to the class I-like SAM-binding methyltransferase superfamily. Cation-dependent O-methyltransferase family. CCoAMT subfamily. A divalent metal cation serves as cofactor.

The catalysed reaction is (E)-caffeoyl-CoA + S-adenosyl-L-methionine = (E)-feruloyl-CoA + S-adenosyl-L-homocysteine + H(+). The protein operates within aromatic compound metabolism; phenylpropanoid biosynthesis. Functionally, methylates caffeoyl-CoA to feruloyl-CoA and 5-hydroxyferuloyl-CoA to sinapoyl-CoA. Plays a role in the synthesis of feruloylated polysaccharides. Involved in the reinforcement of the plant cell wall. Also involved in the responding to wounding or pathogen challenge by the increased formation of cell wall-bound ferulic acid polymers. The polypeptide is Caffeoyl-CoA O-methyltransferase (Populus tremuloides (Quaking aspen)).